A 312-amino-acid chain; its full sequence is MELHIWPSDFGLPTIDVSSLQFLACSKMCASPVRVVQSARPWRSPNGELPMVAQIDGNAKPVTDFEKFVDILKKCGQDVVIDADLTTIERAQLDAFSCYLHHNLYPAVLHTFWADDLNYNTVTQYWYASHLHFPYNLYYLEKRKKKALRMLGGKNDTEILKDAFMALNTLSTKLGDNKFFCGNKPTSLDALVFGYLAPLLRVPLPNDRLQVQLSACPNLVRFVETVSSIYLPLSEDELKRQQSNRKMWQSRISKAKADKEAAKTTEEAAEAIPDEPPMRDAILFTIGALVLSVAFAIHTGLIQVSVEEEIAE.

A helical membrane pass occupies residues 282–302 (ILFTIGALVLSVAFAIHTGLI).

The protein belongs to the metaxin family. Associates with the mitochondrial contact site and cristae organizing system (MICOS) complex (also known as MINOS or MitOS complex).

The protein resides in the mitochondrion outer membrane. Functionally, involved in transport of proteins into the mitochondrion. Essential for embryonic development. The protein is Metaxin-1 homolog of Caenorhabditis briggsae.